The following is a 363-amino-acid chain: 3-dehydroquinate synthase (363 aa).

NAD(+) contacts are provided by residues 75–80 (DAEEGK), 109–113 (GAVTD), 133–134 (TS), lysine 146, lysine 155, and 173–176 (TLDT). 3 residues coordinate Zn(2+): glutamate 188, histidine 251, and histidine 267.

It belongs to the sugar phosphate cyclases superfamily. Dehydroquinate synthase family. The cofactor is Co(2+). It depends on Zn(2+) as a cofactor. NAD(+) is required as a cofactor.

The protein localises to the cytoplasm. The enzyme catalyses 7-phospho-2-dehydro-3-deoxy-D-arabino-heptonate = 3-dehydroquinate + phosphate. It participates in metabolic intermediate biosynthesis; chorismate biosynthesis; chorismate from D-erythrose 4-phosphate and phosphoenolpyruvate: step 2/7. Catalyzes the conversion of 3-deoxy-D-arabino-heptulosonate 7-phosphate (DAHP) to dehydroquinate (DHQ). In Pseudarthrobacter chlorophenolicus (strain ATCC 700700 / DSM 12829 / CIP 107037 / JCM 12360 / KCTC 9906 / NCIMB 13794 / A6) (Arthrobacter chlorophenolicus), this protein is 3-dehydroquinate synthase.